The primary structure comprises 248 residues: Tyrosine recombinase XerD-like (248 aa).

One can recognise a Core-binding (CB) domain in the interval 1-72; it reads MIAFIEPFLA…TVNQFLYYLY (72 aa). In terms of domain architecture, Tyr recombinase spans 92–248; the sequence is SLKPQLTRLD…PITLEKYYKM (157 aa). Arginine 213 is a catalytic residue. The active-site O-(3'-phospho-DNA)-tyrosine intermediate is the tyrosine 245.

It belongs to the 'phage' integrase family. XerD-like subfamily.

It is found in the cytoplasm. Its function is as follows. Putative tyrosine recombinase. Not involved in the cutting and rejoining of the recombining DNA molecules on dif(SL) site. The chain is Tyrosine recombinase XerD-like from Streptococcus equi subsp. zooepidemicus (strain MGCS10565).